Reading from the N-terminus, the 143-residue chain is uncharacterized protein (143 aa).

This sequence belongs to the OsmC/Ohr family.

This is an uncharacterized protein from Acinetobacter baylyi (strain ATCC 33305 / BD413 / ADP1).